A 213-amino-acid chain; its full sequence is Bcl-2-related ovarian killer protein (213 aa).

Ser7 bears the Phosphoserine mark. The interval 15-45 is interactions with ITPR1; the sequence is MDAFDRSPTDKELVAQAKALGREYVHARLLR. Glycyl lysine isopeptide (Lys-Gly) (interchain with G-Cter in ubiquitin) cross-links involve residues Lys25 and Lys32. Positions 32 to 44 match the BH4 motif; sequence KALGREYVHARLL. The BH3 signature appears at 67 to 83; sequence VCTVLLRLGDELEQIRP. The nuclear export signal stretch occupies residues 71–79; that stretch reads LLRLGDELE. The BH1 motif lies at 113–132; sequence HIFSAGITWGKVVSLYSVAA. Glycyl lysine isopeptide (Lys-Gly) (interchain with G-Cter in ubiquitin) cross-links involve residues Lys160 and Lys177. Positions 165–179 match the BH2 motif; it reads WLRRRGGWTDVLKCV. The helical transmembrane segment at 190–210 threads the bilayer; that stretch reads WLVATLCSFGRFLKAAFFLLL.

The protein belongs to the Bcl-2 family. As to quaternary structure, monomer; positively regulates apoptotic process. Homodimer. Heterodimer. Oligomer; promoted by apoptotic stimuli and BH3-only proteins; mediates constitutive activation. Interacts (via BH4 domain) with ITPR1; enhances BOK expression and stabilization; limits apoptosis and prevents ubiquitination and then degradation; protects ITPR1 from proteolysis by CASP3 during apoptosis. Interacts with ITPR2 and ITPR3; binds most strongly to ITPR2, and barely to ITPR3; regulates their expression. Interacts with XPO1; translocates to the cytoplasm. Interacts with BNIP3; promotes oligomerization. In terms of processing, ubiquitinated by AMFR/gp78 E3 ubiquitin ligase complex; mediates degradation by ubiquitin-proteasome pathway in a VCP/p97-dependent manner; prevents from proapoptotic activity; promotes degradation of newly synthesized proteins that are not ITPR1 associated. In terms of tissue distribution, widely expressed. Highly expressed in brain, kidney, and spleen.

It localises to the mitochondrion membrane. It is found in the endoplasmic reticulum membrane. Its subcellular location is the mitochondrion inner membrane. The protein localises to the cytoplasm. The protein resides in the nucleus. It localises to the mitochondrion. It is found in the endoplasmic reticulum. Its subcellular location is the mitochondrion outer membrane. The protein localises to the early endosome membrane. The protein resides in the recycling endosome membrane. It localises to the nucleus outer membrane. It is found in the golgi apparatus. Its subcellular location is the cis-Golgi network membrane. The protein localises to the trans-Golgi network membrane. The protein resides in the membrane. Its function is as follows. Apoptosis regulator that functions through different apoptotic signaling pathways. Plays a roles as pro-apoptotic protein that positively regulates intrinsic apoptotic process in a BAX- and BAK1-dependent manner or in a BAX- and BAK1-independent manner. In response to endoplasmic reticulum stress promotes mitochondrial apoptosis through downstream BAX/BAK1 activation and positive regulation of PERK-mediated unfolded protein response. Activates apoptosis independently of heterodimerization with survival-promoting BCL2 and BCL2L1 through induction of mitochondrial outer membrane permeabilization, in a BAX- and BAK1-independent manner, in response to inhibition of ERAD-proteasome degradation system, resulting in cytochrome c release. In response to DNA damage, mediates intrinsic apoptotic process in a TP53-dependent manner. Plays a role in granulosa cell apoptosis by CASP3 activation. Plays a roles as anti-apoptotic protein during neuronal apoptotic process, by negatively regulating poly ADP-ribose polymerase-dependent cell death through regulation of neuronal calcium homeostasis and mitochondrial bioenergetics in response to NMDA excitation. In addition to its role in apoptosis, may regulate trophoblast cell proliferation during the early stages of placental development, by acting on G1/S transition through regulation of CCNE1 expression. May also play a role as an inducer of autophagy by disrupting interaction between MCL1 and BECN1. This Mus musculus (Mouse) protein is Bcl-2-related ovarian killer protein.